The sequence spans 322 residues: Cytochrome c biogenesis protein CcsA (322 aa).

Helical transmembrane passes span I9–L29, G44–G64, L68–I88, M143–I163, I226–N246, T260–H274, and I289–I309.

This sequence belongs to the CcmF/CycK/Ccl1/NrfE/CcsA family. May interact with Ccs1.

It localises to the plastid. The protein localises to the chloroplast thylakoid membrane. In terms of biological role, required during biogenesis of c-type cytochromes (cytochrome c6 and cytochrome f) at the step of heme attachment. This Hordeum vulgare (Barley) protein is Cytochrome c biogenesis protein CcsA.